Consider the following 252-residue polypeptide: Mannose-P-dolichol utilization defect 1 protein homolog (252 aa).

Residues 34-100 (KALLSKGLGL…HGYPFSAWGD (67 aa)) enclose the PQ-loop 1 domain. Helical transmembrane passes span 41–61 (LGLAIIAGSVLVKVPQVLKIL), 69–89 (INIVGVVLDLLAISFHLSYNF), 98–118 (WGDSTFLAIQTVTIAVLVLFF), 126–146 (GLFLVGYVVLMYVLNSGLTPM), 148–168 (VLFTIQSCNIPILLVGKLSQA), 180–200 (LSAATVIMMFAGSVARIFTSI), and 207–227 (MIILTFIASTFANSVILGQLI). One can recognise a PQ-loop 2 domain in the interval 157–211 (IPILLVGKLSQAYTNYQAGSTGQLSAATVIMMFAGSVARIFTSIQETGDFMIILT).

This sequence belongs to the MPDU1 (TC 2.A.43.3) family.

The protein resides in the membrane. This chain is Mannose-P-dolichol utilization defect 1 protein homolog, found in Drosophila melanogaster (Fruit fly).